Here is a 1024-residue protein sequence, read N- to C-terminus: Multidrug resistance protein MdtC (1024 aa).

The next 12 helical transmembrane spans lie at 12–32 (VATT…FSLL), 333–353 (EVER…FIFL), 360–380 (LIPA…MYLC), 387–407 (LSLM…IVVL), 435–455 (VLSM…MAGL), 469–489 (VAIG…CAWL), 528–548 (WVMV…ISIP), 853–873 (LWLI…LYES), 875–895 (VHPL…LLAL), 897–917 (LFDA…IGIV), 953–973 (PIIM…LSSG), and 984–1004 (ITIV…TPVI).

This sequence belongs to the resistance-nodulation-cell division (RND) (TC 2.A.6) family. MdtC subfamily. In terms of assembly, part of a tripartite efflux system composed of MdtA, MdtB and MdtC. MdtC forms a heteromultimer with MdtB.

The protein localises to the cell inner membrane. This chain is Multidrug resistance protein MdtC, found in Yersinia pseudotuberculosis serotype IB (strain PB1/+).